The primary structure comprises 292 residues: Elongation factor Ts (292 aa).

An involved in Mg(2+) ion dislocation from EF-Tu region spans residues Thr-80–Val-83.

It belongs to the EF-Ts family.

The protein localises to the cytoplasm. Associates with the EF-Tu.GDP complex and induces the exchange of GDP to GTP. It remains bound to the aminoacyl-tRNA.EF-Tu.GTP complex up to the GTP hydrolysis stage on the ribosome. The polypeptide is Elongation factor Ts (Pediococcus pentosaceus (strain ATCC 25745 / CCUG 21536 / LMG 10740 / 183-1w)).